The primary structure comprises 100 residues: Urease subunit gamma (100 aa).

Belongs to the urease gamma subunit family. As to quaternary structure, heterotrimer of UreA (gamma), UreB (beta) and UreC (alpha) subunits. Three heterotrimers associate to form the active enzyme.

The protein localises to the cytoplasm. The enzyme catalyses urea + 2 H2O + H(+) = hydrogencarbonate + 2 NH4(+). The protein operates within nitrogen metabolism; urea degradation; CO(2) and NH(3) from urea (urease route): step 1/1. This Paraburkholderia phymatum (strain DSM 17167 / CIP 108236 / LMG 21445 / STM815) (Burkholderia phymatum) protein is Urease subunit gamma.